A 638-amino-acid chain; its full sequence is MDNNHKGPNDPNSKKPLLQNPLLLIAIFGIIIFVAMRVMNSDEGFGDRFLSTSTKNISYHEMKELIEKKEVDSVSIGQTLIKAISKEGNNKTIYVAKRVPDLSLVPLLDSQKINYSGFSESNFFADILGWLLPVLVILGLWMFMASRMQKNMGGGIFGMGSSKKLINAEKPKVRFNDMAGNEEAKEEVVEIVDFLKYPDRYASLGAKIPKGVLLVGPPGTGKTLLAKAVAGEASVPFFSMGGSSFIEMFVGLGASRVRDLFDIAKKEAPSIIFIDEIDAIGKSRAAGGMISGNDEREQTLNQLLAEMDGFGSENAPVIVLAATNRPEILDPALLRPGRFDRQVLVDKPDFKGRVEILKVHIKPVKLANDVDLQEIAKLTAGLAGADLANIINEAALLAGRNNQKEVKQQHLKEAVERGIAGLEKKSRRISPKEKKIVAYHESGHAVISEMTKGSARVNKVSIIPRGMAALGYTLNTPEENKYLMQKHELIAEIDVLLGGRAAEDVFLQEISTGASNDLERATDIIKGMVSYYGMSDVSGLMVLEKQRNSFLGGGFGSGREFSEKMAEEMDSFIKNLLEERYVHVKQTLSDYKDAIEVMVNELFEKEVITGERVREIISEYEVSHNLQTRLVPLEEHAS.

Over 1-15 (MDNNHKGPNDPNSKK) the chain is Cytoplasmic. The chain crosses the membrane as a helical span at residues 16–36 (PLLQNPLLLIAIFGIIIFVAM). The Periplasmic segment spans residues 37–122 (RVMNSDEGFG…INYSGFSESN (86 aa)). The chain crosses the membrane as a helical span at residues 123-143 (FFADILGWLLPVLVILGLWMF). The Cytoplasmic portion of the chain corresponds to 144–638 (MASRMQKNMG…RLVPLEEHAS (495 aa)). 216–223 (GPPGTGKT) is a binding site for ATP. His440 is a binding site for Zn(2+). Glu441 is an active-site residue. Residues His444 and Asp517 each coordinate Zn(2+).

It in the central section; belongs to the AAA ATPase family. The protein in the C-terminal section; belongs to the peptidase M41 family. In terms of assembly, homohexamer. The cofactor is Zn(2+).

It is found in the cell inner membrane. Acts as a processive, ATP-dependent zinc metallopeptidase for both cytoplasmic and membrane proteins. Plays a role in the quality control of integral membrane proteins. This is ATP-dependent zinc metalloprotease FtsH from Helicobacter felis (strain ATCC 49179 / CCUG 28539 / NCTC 12436 / CS1).